The sequence spans 331 residues: Sideroflexin-5 (331 aa).

The next 4 helical transmembrane spans lie at 104–126 (PFGW…LLFW), 153–175 (YIGA…TYFI), 243–265 (TTMV…MPYL), and 278–300 (HIFV…ALAL).

It belongs to the sideroflexin family.

The protein resides in the mitochondrion inner membrane. The catalysed reaction is citrate(in) = citrate(out). In terms of biological role, mitochondrial amino-acid transporter. This is Sideroflexin-5 from Caenorhabditis elegans.